Consider the following 232-residue polypeptide: UPF0502 protein Aave_3438 (232 aa).

Belongs to the UPF0502 family.

The sequence is that of UPF0502 protein Aave_3438 from Paracidovorax citrulli (strain AAC00-1) (Acidovorax citrulli).